A 263-amino-acid polypeptide reads, in one-letter code: Interleukin-33 (263 aa).

A compositionally biased stretch (polar residues) spans 1–17 (MKYSTTKIPPAKMNSSA). A disordered region spans residues 1–28 (MKYSTTKIPPAKMNSSADKALVKSPKLR). Residues 1-65 (MKYSTTKIPP…CYFRKEITKR (65 aa)) form a homeodomain-like HTH domain region. Positions 62–103 (ITKRYSPRTAEKCRKQCLVFTACHQQLNKDFTSDVPMLQKCF) are interaction with RELA.

This sequence belongs to the IL-1 family. Highly divergent. In terms of assembly, forms a 1:1:1 heterotrimeric complex with its primary high-affinity receptor IL1RL1 and the coreceptor IL1RAP. Interacts with cargo receptor TMED10; the interaction mediates the translocation from the cytoplasm into the ERGIC (endoplasmic reticulum-Golgi intermediate compartment) and thereby secretion. In terms of processing, the full-length protein can be released from cells and is able to signal via the IL1RL1/ST2 receptor. However, proteolytic processing by CELA1, CSTG/cathepsin G and ELANE/neutrophil elastase produces C-terminal peptides that are more active than the unprocessed full-length protein. May also be proteolytically processed by calpains. Proteolytic cleavage mediated by apoptotic caspases including CASP3 and CASP7 results in IL33 inactivation. In vitro proteolytic cleavage by CASP1 was reported but could not be confirmed in vivo suggesting that IL33 is probably not a direct substrate for that caspase. In terms of tissue distribution, expressed in cultured umbilical artery smooth muscle cells after stimulation with IL1A and IL1B, and to a lesser extent with IFNG. Expressed in vasospastic cerebral arteries after subarachnoid hemorrhage.

The protein resides in the nucleus. It localises to the chromosome. It is found in the cytoplasm. Its subcellular location is the cytoplasmic vesicle. The protein localises to the secretory vesicle. The protein resides in the secreted. Cytokine that binds to and signals through the IL1RL1/ST2 receptor which in turn activates NF-kappa-B and MAPK signaling pathways in target cells. Involved in the maturation of Th2 cells inducing the secretion of T-helper type 2-associated cytokines. Also involved in activation of mast cells, basophils, eosinophils and natural killer cells. Acts as a chemoattractant for Th2 cells, and may function as an 'alarmin', that amplifies immune responses during tissue injury. Induces rapid UCP2-dependent mitochondrial rewiring that attenuates the generation of reactive oxygen species and preserves the integrity of Krebs cycle required for persistent production of itaconate and subsequent GATA3-dependent differentiation of inflammation-resolving alternatively activated macrophages. Functionally, in quiescent endothelia the uncleaved form is constitutively and abundantly expressed, and acts as a chromatin-associated nuclear factor with transcriptional repressor properties, it may sequester nuclear NF-kappaB/RELA, lowering expression of its targets. This form is rapidely lost upon angiogenic or pro-inflammatory activation. This chain is Interleukin-33 (IL33), found in Canis lupus familiaris (Dog).